We begin with the raw amino-acid sequence, 81 residues long: Photosystem I iron-sulfur center (81 aa).

4Fe-4S ferredoxin-type domains lie at 2–31 (SHSV…MVPW) and 39–68 (IASA…VRVY). [4Fe-4S] cluster-binding residues include Cys11, Cys14, Cys17, Cys21, Cys48, Cys51, Cys54, and Cys58.

In terms of assembly, the eukaryotic PSI reaction center is composed of at least 11 subunits. Requires [4Fe-4S] cluster as cofactor.

The protein resides in the plastid. Its subcellular location is the chloroplast thylakoid membrane. The catalysed reaction is reduced [plastocyanin] + hnu + oxidized [2Fe-2S]-[ferredoxin] = oxidized [plastocyanin] + reduced [2Fe-2S]-[ferredoxin]. Apoprotein for the two 4Fe-4S centers FA and FB of photosystem I (PSI); essential for photochemical activity. FB is the terminal electron acceptor of PSI, donating electrons to ferredoxin. The C-terminus interacts with PsaA/B/D and helps assemble the protein into the PSI complex. Required for binding of PsaD and PsaE to PSI. PSI is a plastocyanin/cytochrome c6-ferredoxin oxidoreductase, converting photonic excitation into a charge separation, which transfers an electron from the donor P700 chlorophyll pair to the spectroscopically characterized acceptors A0, A1, FX, FA and FB in turn. The polypeptide is Photosystem I iron-sulfur center (Nephroselmis olivacea (Green alga)).